The primary structure comprises 243 residues: Terpene cyclase ptmB (243 aa).

Helical transmembrane passes span 19–39, 48–68, and 78–98; these read IANL…VGMI, YGMA…YSLI, and GVFI…IKFA. Asparagine 111 carries an N-linked (GlcNAc...) asparagine glycan. The next 4 membrane-spanning stretches (helical) occupy residues 112-132, 137-157, 172-194, and 205-225; these read LSLI…ALAA, SLAY…GGLC, LWLS…WMYW, and LVLW…ICYW.

The protein belongs to the paxB family.

It is found in the membrane. Its pathway is secondary metabolite biosynthesis. In terms of biological role, terpene cyclase; part of the gene cluster that mediates the biosynthesis of the indole diterpenes penitrems. The geranylgeranyl diphosphate (GGPP) synthase ptmG catalyzes the first step in penitrem biosynthesis via conversion of farnesyl pyrophosphate and isopentyl pyrophosphate into geranylgeranyl pyrophosphate (GGPP). Condensation of indole-3-glycerol phosphate with GGPP by the prenyl transferase ptmC then forms 3-geranylgeranylindole (3-GGI). Epoxidation by the FAD-dependent monooxygenase ptmM leads to a epoxidized-GGI that is substrate of the terpene cyclase ptmB for cyclization to yield paspaline. Paspaline is subsequently converted to 13-desoxypaxilline by the cytochrome P450 monooxygenase ptmP, the latter being then converted to paxilline by the cytochrome P450 monooxygenase ptmQ. Paxilline is converted to beta-paxitriol via C-10 ketoreduction by the short-chain dehydrogenase ptmH which can be monoprenylated at the C-20 by the indole diterpene prenyltransferase ptmD. A two-step elimination (acetylation and elimination) process performed by the O-acetyltransferase ptmV and ptmI leads to the production of the prenylated form of penijanthine. The FAD-linked oxidoreductase ptmO then converts the prenylated form of penijanthine into PC-M5 which is in turn transformed into PC-M4 by the aromatic dimethylallyltransferase ptmE. Five sequential oxidative transformations performed by the cytochrome P450 monooxygenases ptmK, ptmU, ptmL, ptmN and ptmJ yield the various penitrem compounds. PtmK, ptmU and ptmM are involved in the formation of the key bicyclic ring of penitrem C via the formation of the intermediates secopenitrem D and penitrem D. PtmL catalyzes the epoxidation of penitrem D and C to yield penitrem B and F, respectively. PtmJ catalyzes the last benzylic hydroxylation to convert penitrem B to prenitrem E and penitrem F to penitrem A. This chain is Terpene cyclase ptmB, found in Penicillium ochrochloron.